Here is a 79-residue protein sequence, read N- to C-terminus: U-actitoxin-Avd9d (79 aa).

The signal sequence occupies residues 1–19 (NLKVLAVFVLCAILVVVTA). Residues 20-37 (ERRGTETGGYKKDTLEDL) constitute a propeptide that is removed on maturation. The 36-residue stretch at 44–79 (CFDSFKEATCHMAKTNRLCKTSAKYQINCKKTCGLC) folds into the ShKT domain. 3 disulfide bridges follow: cysteine 44-cysteine 79, cysteine 53-cysteine 72, and cysteine 62-cysteine 76. The tract at residues 67 to 68 (KY) is crucial for binding to potassium channels.

Belongs to the sea anemone type 1 potassium channel toxin family. Type 1b subfamily.

Its subcellular location is the secreted. The protein resides in the nematocyst. Its function is as follows. Inhibits voltage-gated potassium channels (Kv1/KCNA). The protein is U-actitoxin-Avd9d of Anemonia viridis (Snakelocks anemone).